A 222-amino-acid chain; its full sequence is Small ribosomal subunit protein eS8z (222 aa).

2 disordered regions span residues 1–37 (MGISRDSIHKRRATGGKQKQWRKKRKYEMGRQPANTK) and 125–147 (KKKSASSTKKDGEEGEEAAVAAP). The span at 8-26 (IHKRRATGGKQKQWRKKRK) shows a compositional bias: basic residues.

It belongs to the eukaryotic ribosomal protein eS8 family.

The protein is Small ribosomal subunit protein eS8z (RPS8A) of Arabidopsis thaliana (Mouse-ear cress).